The sequence spans 302 residues: GTP cyclohydrolase FolE2 (302 aa).

It belongs to the GTP cyclohydrolase IV family.

It carries out the reaction GTP + H2O = 7,8-dihydroneopterin 3'-triphosphate + formate + H(+). It functions in the pathway cofactor biosynthesis; 7,8-dihydroneopterin triphosphate biosynthesis; 7,8-dihydroneopterin triphosphate from GTP: step 1/1. In terms of biological role, converts GTP to 7,8-dihydroneopterin triphosphate. This Pseudoalteromonas translucida (strain TAC 125) protein is GTP cyclohydrolase FolE2.